An 879-amino-acid polypeptide reads, in one-letter code: Paramyosin, long form (879 aa).

The interval 1–31 (MSSSQAVRSSKYSYRATSTGPGTADVNIEYI) is nonhelical region. The residue at position 18 (Ser-18) is a Phosphoserine. The stretch at 32–858 (QDLSSLSRLE…IIRAKHRTFV (827 aa)) forms a coiled coil. A nonhelical region region spans residues 859 to 879 (TTSTVPGSQVYIQETTRTITE).

This sequence belongs to the paramyosin family. Heterodimer of two isoforms. Post-translationally, the more-acidic and less-abundant isoform is phosphorylated. As to expression, expressed in all larval and adult muscle tissues. Expression is five times higher in tubular than in fibrillar muscles.

Its subcellular location is the cytoplasm. The protein resides in the myofibril. Functionally, paramyosin is a major structural component of many thick filaments isolated from invertebrate muscles. The chain is Paramyosin, long form (Prm) from Drosophila melanogaster (Fruit fly).